A 116-amino-acid polypeptide reads, in one-letter code: Probable transcriptional regulator WhiB6 (116 aa).

Residues C12, C53, C56, and C62 each coordinate [4Fe-4S] cluster. The 4Fe-4S Wbl-type domain maps to 33–86 (VCTQDPDRWTTTPDDEAKTLCRACPRRWLCARDAVESAGAEGLWAGVVIPESGR).

The protein belongs to the WhiB family. It depends on [4Fe-4S] cluster as a cofactor. In terms of processing, the Fe-S cluster can be nitrosylated by nitric oxide (NO). Post-translationally, upon Fe-S cluster removal intramolecular disulfide bonds are formed.

It localises to the cytoplasm. In terms of biological role, acts as a transcriptional regulator. Probably redox-responsive. The apo- but not holo-form probably binds DNA. The chain is Probable transcriptional regulator WhiB6 (whiB6) from Mycobacterium tuberculosis (strain CDC 1551 / Oshkosh).